Reading from the N-terminus, the 196-residue chain is MIYITPIAQKHFTKLLAGKKPGTQIRVFVVNPGTVHAKCNVCFCPPEEFKTSDVVIEFDLFSVHVDSVYVSFLKDAKIDVMINELDSQLTIKAPNATKECNNTRNNMNNDLLEDRVRNVLQFQINPQLELHGGSVSLIRITEDLLAVIKFYGGCNGCAMASYTIKEGIETTLKNLFPELKGVLDMTQHQHGTHSFY.

Cys154 and Cys157 together coordinate [4Fe-4S] cluster.

It belongs to the NfuA family. In terms of assembly, homodimer. [4Fe-4S] cluster serves as cofactor.

Functionally, involved in iron-sulfur cluster biogenesis. Binds a 4Fe-4S cluster, can transfer this cluster to apoproteins, and thereby intervenes in the maturation of Fe/S proteins. Could also act as a scaffold/chaperone for damaged Fe/S proteins. The protein is Fe/S biogenesis protein NfuA of Blochmanniella pennsylvanica (strain BPEN).